The sequence spans 89 residues: UPF0367 protein PMM0124 (89 aa).

This sequence belongs to the UPF0367 family.

This is UPF0367 protein PMM0124 from Prochlorococcus marinus subsp. pastoris (strain CCMP1986 / NIES-2087 / MED4).